Consider the following 364-residue polypeptide: MAAVRKPVLLGLRDTAVKGCPKGPSAWTSSKLGGVPDALPAVTTPGPQCGRCAQPLTLVVQVYCPLDGSPFHRLLYVFACARPGCGNSQTRSWKVFRSQCLQVPEKETWNAQNQSDSLAAENWCEGSQDWGSDTEETPPPPASDLGSDSNDVRALDWTEKLQALRLQDTALAVTCPSPSGEGLTVPTAVPQFQPYYICVAEEEDYGSVVDLDHAHSLLQEYQRREGVDMEQLLSLGSSDGDEKYEKTTVSSGDPTFYRFMKRIAACQEQILRYSWSGEPLFLSCPTFEVSEVPACSGCGGQRTFEFQLMPALVSMLSSANLGLAVEFGTILVYTCKQSCWPPNQQMPMEEFCVLQEDPDEFLFK.

Ala2 is subject to N-acetylalanine. A disordered region spans residues 125 to 150 (EGSQDWGSDTEETPPPPASDLGSDSN).

Its function is as follows. Over-expression suppresses AP1, CREB, NFAT, and NF-kB transcriptional activation, and delays cell cycle progression at S phase. This is Programmed cell death protein 2-like (Pdcd2l) from Mus musculus (Mouse).